Reading from the N-terminus, the 299-residue chain is GTPase Era (299 aa).

Positions 8 to 176 (RCGYVAIVGR…EKLVGERLPE (169 aa)) constitute an Era-type G domain. Residues 16 to 23 (GRPNVGKS) are G1. 16–23 (GRPNVGKS) provides a ligand contact to GTP. The tract at residues 42 to 46 (QTTRH) is G2. Residues 63–66 (DTPG) are G3. Residues 63-67 (DTPGL) and 125-128 (NKAD) contribute to the GTP site. The interval 125-128 (NKAD) is G4. The tract at residues 155 to 157 (ISA) is G5. One can recognise a KH type-2 domain in the interval 199–283 (IREKIMRQLG…MLNLWVKVKG (85 aa)).

The protein belongs to the TRAFAC class TrmE-Era-EngA-EngB-Septin-like GTPase superfamily. Era GTPase family. As to quaternary structure, monomer.

The protein resides in the cytoplasm. It is found in the cell inner membrane. Functionally, an essential GTPase that binds both GDP and GTP, with rapid nucleotide exchange. Plays a role in 16S rRNA processing and 30S ribosomal subunit biogenesis and possibly also in cell cycle regulation and energy metabolism. The sequence is that of GTPase Era from Ectopseudomonas mendocina (strain ymp) (Pseudomonas mendocina).